The primary structure comprises 716 residues: DNA ligase (716 aa).

Residues 49-53, 98-99, and Glu132 contribute to the NAD(+) site; these read DAAYD and SL. The N6-AMP-lysine intermediate role is filled by Lys134. Arg155, Glu192, Lys308, and Lys332 together coordinate NAD(+). Positions 437, 439, 461, and 467 each coordinate Zn(2+). In terms of domain architecture, BRCT spans 638 to 716; that stretch reads KRNSPIATKT…EDEWLQLIGE (79 aa).

Belongs to the NAD-dependent DNA ligase family. LigA subfamily. Requires Mg(2+) as cofactor. It depends on Mn(2+) as a cofactor.

The enzyme catalyses NAD(+) + (deoxyribonucleotide)n-3'-hydroxyl + 5'-phospho-(deoxyribonucleotide)m = (deoxyribonucleotide)n+m + AMP + beta-nicotinamide D-nucleotide.. In terms of biological role, DNA ligase that catalyzes the formation of phosphodiester linkages between 5'-phosphoryl and 3'-hydroxyl groups in double-stranded DNA using NAD as a coenzyme and as the energy source for the reaction. It is essential for DNA replication and repair of damaged DNA. This Bradyrhizobium sp. (strain ORS 278) protein is DNA ligase.